Here is a 490-residue protein sequence, read N- to C-terminus: ATP synthase subunit alpha 1 (490 aa).

It belongs to the ATPase alpha/beta chains family. In terms of assembly, F-type ATPases have 2 components, CF(1) - the catalytic core - and CF(0) - the membrane proton channel. CF(1) has five subunits: alpha(3), beta(3), gamma(1), delta(1), epsilon(1). CF(0) has three main subunits: a(1), b(2) and c(9-12). The alpha and beta chains form an alternating ring which encloses part of the gamma chain. CF(1) is attached to CF(0) by a central stalk formed by the gamma and epsilon chains, while a peripheral stalk is formed by the delta and b chains.

It is found in the cell inner membrane. It catalyses the reaction ATP + H2O + 4 H(+)(in) = ADP + phosphate + 5 H(+)(out). Its function is as follows. Produces ATP from ADP in the presence of a proton gradient across the membrane. The alpha chain is a regulatory subunit. This chain is ATP synthase subunit alpha 1, found in Legionella pneumophila (strain Paris).